We begin with the raw amino-acid sequence, 333 residues long: Large ribosomal subunit protein uL3 (333 aa).

Basic residues-rich tracts occupy residues 1 to 10 (MGMKRNRPRR) and 17 to 26 (PRKRAKRPVP). The disordered stretch occupies residues 1 to 29 (MGMKRNRPRRGSLAFSPRKRAKRPVPKIR).

Belongs to the universal ribosomal protein uL3 family. In terms of assembly, part of the 50S ribosomal subunit. Forms a cluster with proteins L14 and L24e.

One of the primary rRNA binding proteins, it binds directly near the 3'-end of the 23S rRNA, where it nucleates assembly of the 50S subunit. The protein is Large ribosomal subunit protein uL3 of Methanococcus aeolicus (strain ATCC BAA-1280 / DSM 17508 / OCM 812 / Nankai-3).